We begin with the raw amino-acid sequence, 335 residues long: Tetraacyldisaccharide 4'-kinase (335 aa).

Threonine 58–threonine 65 contributes to the ATP binding site.

Belongs to the LpxK family.

The catalysed reaction is a lipid A disaccharide + ATP = a lipid IVA + ADP + H(+). The protein operates within glycolipid biosynthesis; lipid IV(A) biosynthesis; lipid IV(A) from (3R)-3-hydroxytetradecanoyl-[acyl-carrier-protein] and UDP-N-acetyl-alpha-D-glucosamine: step 6/6. Functionally, transfers the gamma-phosphate of ATP to the 4'-position of a tetraacyldisaccharide 1-phosphate intermediate (termed DS-1-P) to form tetraacyldisaccharide 1,4'-bis-phosphate (lipid IVA). The polypeptide is Tetraacyldisaccharide 4'-kinase (Shewanella sp. (strain MR-4)).